The sequence spans 554 residues: (S)-1-hydroxy-N-methylcanadine 13-hydroxylase CYP82X2 (554 aa).

The chain crosses the membrane as a helical span at residues 23–43 (IISTFIVTIISIVFLYTVLLI). Cys494 is a binding site for heme.

The protein belongs to the cytochrome P450 family. It depends on heme as a cofactor. In terms of tissue distribution, highly expressed in capsules. Expressed is stems.

The protein localises to the membrane. The enzyme catalyses (S)-1-hydroxy-N-methylcanadine + reduced [NADPH--hemoprotein reductase] + O2 = (13S,14R)-1,13-dihydroxy-N-methylcanadine + oxidized [NADPH--hemoprotein reductase] + H2O + H(+). The protein operates within alkaloid biosynthesis. Cytochrome P450 involved in the biosynthesis of the benzylisoquinoline alkaloid noscapine. Converts (S)-1-hydroxy-N-methylcanadine to (13S,14R)-1,13-dihydroxy-N-methylcanadine. The polypeptide is (S)-1-hydroxy-N-methylcanadine 13-hydroxylase CYP82X2 (Papaver somniferum (Opium poppy)).